The sequence spans 671 residues: Preterminal protein (671 aa).

The short motif at 380–389 (RLPVRRRRRR) is the Nuclear localization signal element. Residues 386–411 (RRRRVPPPPPPPEEEEGEALMEEEIE) form a disordered region. Residues 397 to 411 (PEEEEGEALMEEEIE) show a composition bias toward acidic residues. S580 is subject to O-(5'-phospho-DNA)-serine. Residues 645–671 (GADVPLPPLPAGPEPPLPPGARPRHRF) are disordered. The segment covering 649–665 (PLPPLPAGPEPPLPPGA) has biased composition (pro residues).

This sequence belongs to the adenoviridae terminal protein family. In terms of assembly, heterodimer with the polymerase; this heterodimer binds to bp 9 to 18 of the genome. Interacts with host POU2F1; POU2F1 binds to the auxiliary sequences in the inverted terminal repeats and tethers the pTP-POL heterodimer to the origin DNA thereby participating in the assembly of the pre-initiation complex (POL-TP-DBP-NFIA-POU2F1). Post-translationally, preterminal protein is used to replicate viral genome, upon genomic encapsidation it is processed first into iTP and finally into TP by adenovirus protease.

The protein resides in the host nucleus matrix. Its function is as follows. Protein covalently bound to the viral DNA that acts as a primer for viral genomic replication by DNA strand displacement. Assembles on the viral origin of replication in an initiation complex with viral polymerase, DBP, host NFIA and host POU2F1/OCT1. During initiation, the polymerase covalently couples the first dCTP with Ser-580 of pTP. The terminal protein stimulates the template activity over 20 fold compared to protein-free templates. Neo-synthesized viral genomes are linked to two preterminal proteins, one for each 5' end. These new genomes are encapsidated in the nucleus, and during capsid maturation by viral protease, preterminal protein is first cleaved into intermediary (iTP), then into mature TP. May play a role in host nuclear matrix localization of genomic DNA. In Human adenovirus C serotype 5 (HAdV-5), this protein is Preterminal protein.